A 250-amino-acid polypeptide reads, in one-letter code: MTVERVSAPTPAAFVDAANAAFRNGAVLSVQARCEVEYNGRTSGYLGDGDRLLVAKPDGTFLVHQPTGHKPVNWMPGGGTVEARTSQGDAVLLARRSNPTERVETRLHEVYGVTRFDAEDGATYEESGTEAEMHEYIEANPDALEAGLRIVEHERETKYGFIDFYAVDGDGTPVVIEVKRIQATLNHFDQLKRYVDRYAETNDDVRGMLVAPSASERVTRALRDNGLEFVALAEFGLDAKGATEAKLTDF.

This sequence belongs to the NucS endonuclease family.

It is found in the cytoplasm. Its function is as follows. Cleaves both 3' and 5' ssDNA extremities of branched DNA structures. The polypeptide is Endonuclease NucS 2 (Halobacterium salinarum (strain ATCC 700922 / JCM 11081 / NRC-1) (Halobacterium halobium)).